The chain runs to 345 residues: Phenylalanine--tRNA ligase alpha subunit (345 aa).

E255 serves as a coordination point for Mg(2+).

Belongs to the class-II aminoacyl-tRNA synthetase family. Phe-tRNA synthetase alpha subunit type 1 subfamily. As to quaternary structure, tetramer of two alpha and two beta subunits. Mg(2+) is required as a cofactor.

It is found in the cytoplasm. It carries out the reaction tRNA(Phe) + L-phenylalanine + ATP = L-phenylalanyl-tRNA(Phe) + AMP + diphosphate + H(+). The sequence is that of Phenylalanine--tRNA ligase alpha subunit from Lysinibacillus sphaericus (strain C3-41).